Consider the following 578-residue polypeptide: SCARECROW-LIKE protein 7 (578 aa).

The segment covering 18–29 (VIQQQQQQQQQQ) has biased composition (low complexity). Disordered stretches follow at residues 18-84 (VIQQ…LAYG) and 146-173 (PPPP…APRP). A compositionally biased stretch (basic residues) spans 49 to 61 (PHHHQQKHHHHHQ). Over residues 62–74 (QMPAMPQAPPSSH) the composition is skewed to low complexity. Residues 146-156 (PPPPVPSPPPT) are compositionally biased toward pro residues. A compositionally biased stretch (low complexity) spans 157-173 (HAAATATATAATAAPRP). The GRAS domain maps to 198–578 (SADASCSAPI…RPLLTVSAWR (381 aa)). The tract at residues 205 to 264 (APILQSLLSCSRAAATDPGLAAAELASVRAAATDAGDPSERLAFYFADALSRRLACGTGA) is leucine repeat I (LRI). The segment at 283-349 (YKTLNDACPY…GKPTRIRITG (67 aa)) is VHIID. Positions 314-318 (IHIVD) match the VHIID motif. Positions 365–397 (ATNTRLRDFAKLLGVDFEFVPLLRPVHELNKSD) are leucine repeat II (LRII). A PFYRE region spans residues 406–497 (VAVNFMLQLY…RWMFGERIQR (92 aa)). Residues 414-418 (LYHLL) carry the LXXLL motif motif. The interval 500-578 (GPEEGADRTE…RPLLTVSAWR (79 aa)) is SAW.

The protein belongs to the GRAS family. As to quaternary structure, homodimer.

It localises to the nucleus. Probable transcription factor involved in plant development. Involved in environmental abiotic stress resistance. May increase the expression of stress-responsive genes. Binds DNA in vitro. The sequence is that of SCARECROW-LIKE protein 7 from Oryza sativa subsp. japonica (Rice).